A 336-amino-acid chain; its full sequence is MVSYVPEIPLREPVTVEKKKSFPQQKSGLHPRNRHRSRYDFPALIASCPALEPFVKPNAWGDISVDFADPAAVKMLNRALLQHFYGIEHWDIPADYLCPPIPGRADYLHHLADLLATSNDGEIPRGKGVAILDVGIGANCIYPIVGLREYGWRFTGSEIDPVSLNSAKMIVEMNPTLRNSVRLRLQKQPEFIFNGIIGVAEKFDATLCNPPFHGSEQEAQASTRRKLHKLGKGEVADKPVQNFGGKNNELWCEGGEEAFVRKMVEESVSKAQNCLWFTSLISKHTTLPSIYHAAKLAGVAEVRTIEMAQGQKISRFVAWTFHDAEQQAAWAAERWR.

It belongs to the methyltransferase superfamily. METTL16/RlmF family.

It localises to the cytoplasm. It carries out the reaction adenosine(1618) in 23S rRNA + S-adenosyl-L-methionine = N(6)-methyladenosine(1618) in 23S rRNA + S-adenosyl-L-homocysteine + H(+). Functionally, specifically methylates the adenine in position 1618 of 23S rRNA. The sequence is that of Ribosomal RNA large subunit methyltransferase F from Serratia proteamaculans (strain 568).